We begin with the raw amino-acid sequence, 233 residues long: Pre-mRNA-splicing factor syf-2 (233 aa).

Residues 1 to 16 (MSDSEQTSSGTASSGS) are compositionally biased toward polar residues. 2 disordered regions span residues 1–80 (MSDS…EDKG) and 95–119 (VTEK…YEDM). The segment covering 17 to 80 (KMKDFNQRFR…QDRKEAEDKG (64 aa)) has biased composition (basic and acidic residues). The stretch at 18–77 (MKDFNQRFRDLHKMRQKARKENHAQVVEEDRRKKLPKNFEAKKERDQWQVKELQDRKEAE) forms a coiled coil.

This sequence belongs to the SYF2 family. As to quaternary structure, may be part of a spliceosome complex.

The protein resides in the nucleus. In terms of biological role, may be involved in pre-mRNA splicing. The sequence is that of Pre-mRNA-splicing factor syf-2 from Caenorhabditis briggsae.